The sequence spans 186 residues: Ribosome-recycling factor (186 aa).

This sequence belongs to the RRF family.

The protein localises to the cytoplasm. Its function is as follows. Responsible for the release of ribosomes from messenger RNA at the termination of protein biosynthesis. May increase the efficiency of translation by recycling ribosomes from one round of translation to another. The sequence is that of Ribosome-recycling factor from Brucella melitensis biotype 2 (strain ATCC 23457).